A 448-amino-acid polypeptide reads, in one-letter code: tRNA modification GTPase MnmE (448 aa).

Residues Arg25, Glu82, and Lys121 each coordinate (6S)-5-formyl-5,6,7,8-tetrahydrofolate. The TrmE-type G domain maps to 217–372 (GLTTVIAGRP…LRQEIIRRAG (156 aa)). Asn227 provides a ligand contact to K(+). GTP is bound by residues 227-232 (NVGKSS), 246-252 (TEIPGTT), 271-274 (DTAG), and 353-355 (SAR). Ser231 provides a ligand contact to Mg(2+). Residues Thr246, Ile248, and Thr251 each contribute to the K(+) site. Thr252 serves as a coordination point for Mg(2+). Lys448 is a (6S)-5-formyl-5,6,7,8-tetrahydrofolate binding site.

This sequence belongs to the TRAFAC class TrmE-Era-EngA-EngB-Septin-like GTPase superfamily. TrmE GTPase family. As to quaternary structure, homodimer. Heterotetramer of two MnmE and two MnmG subunits. K(+) is required as a cofactor.

It localises to the cytoplasm. Exhibits a very high intrinsic GTPase hydrolysis rate. Involved in the addition of a carboxymethylaminomethyl (cmnm) group at the wobble position (U34) of certain tRNAs, forming tRNA-cmnm(5)s(2)U34. This Methylococcus capsulatus (strain ATCC 33009 / NCIMB 11132 / Bath) protein is tRNA modification GTPase MnmE.